Here is a 520-residue protein sequence, read N- to C-terminus: Cytochrome P450 6d3 (520 aa).

Cys-461 is a binding site for heme.

Belongs to the cytochrome P450 family. Heme serves as cofactor.

The protein localises to the endoplasmic reticulum membrane. It is found in the microsome membrane. Metabolizes pyrethroid insecticides and other xenobiotics. The chain is Cytochrome P450 6d3 (CYP6D3) from Musca domestica (House fly).